The following is a 128-amino-acid chain: Ferric uptake regulation protein homolog (128 aa).

The protein belongs to the Fur family.

The polypeptide is Ferric uptake regulation protein homolog (Archaeoglobus fulgidus (strain ATCC 49558 / DSM 4304 / JCM 9628 / NBRC 100126 / VC-16)).